The chain runs to 189 residues: Ribose 1,5-bisphosphate phosphokinase PhnN (189 aa).

10–17 (GPSGSGKD) lines the ATP pocket.

It belongs to the ribose 1,5-bisphosphokinase family.

It catalyses the reaction alpha-D-ribose 1,5-bisphosphate + ATP = 5-phospho-alpha-D-ribose 1-diphosphate + ADP. The protein operates within metabolic intermediate biosynthesis; 5-phospho-alpha-D-ribose 1-diphosphate biosynthesis; 5-phospho-alpha-D-ribose 1-diphosphate from D-ribose 5-phosphate (route II): step 3/3. Functionally, catalyzes the phosphorylation of ribose 1,5-bisphosphate to 5-phospho-D-ribosyl alpha-1-diphosphate (PRPP). The protein is Ribose 1,5-bisphosphate phosphokinase PhnN of Enterobacter lignolyticus (strain SCF1).